A 196-amino-acid chain; its full sequence is Large ribosomal subunit protein uL5 (196 aa).

The protein belongs to the universal ribosomal protein uL5 family. Part of the 50S ribosomal subunit; part of the 5S rRNA/L5/L18/L25 subcomplex. Contacts the 5S rRNA and the P site tRNA. Forms a bridge to the 30S subunit in the 70S ribosome.

Functionally, this is one of the proteins that bind and probably mediate the attachment of the 5S RNA into the large ribosomal subunit, where it forms part of the central protuberance. In the 70S ribosome it contacts protein S13 of the 30S subunit (bridge B1b), connecting the 2 subunits; this bridge is implicated in subunit movement. Contacts the P site tRNA; the 5S rRNA and some of its associated proteins might help stabilize positioning of ribosome-bound tRNAs. This chain is Large ribosomal subunit protein uL5, found in Acidothermus cellulolyticus (strain ATCC 43068 / DSM 8971 / 11B).